Reading from the N-terminus, the 190-residue chain is uncharacterized protein (190 aa).

At 1 to 55 the chain is on the cytoplasmic side; that stretch reads MSRLRRFNRKILSLSSDYTHDGESDQEDVSILPLDTEEQEELIQKFETNAHITNK. Residues 56–76 form a helical membrane-spanning segment; it reads LYINLLSILYLLYGGLLMILV. The Extracellular segment spans residues 77–80; the sequence is RKSR. A helical transmembrane segment spans residues 81–101; the sequence is GYIKLALLAGANSLICSCITL. Topologically, residues 102–123 are cytoplasmic; that stretch reads RYDIVNDYLLFKKFKLRVSNFS. Residues 124-144 form a helical membrane-spanning segment; sequence INIINIILLVLMAWISFNHVV. Topologically, residues 145-149 are extracellular; that stretch reads EDKKT. Residues 150 to 170 traverse the membrane as a helical segment; the sequence is VLCLQVPMFLFWVAVLVKRWA. Residues 171–190 lie on the Cytoplasmic side of the membrane; the sequence is RNIEDEIADLRCLKYKYKNA.

The protein resides in the membrane. This is an uncharacterized protein from Saccharomyces cerevisiae (strain ATCC 204508 / S288c) (Baker's yeast).